The sequence spans 828 residues: Sarcolemmal membrane-associated protein (828 aa).

Positions 1-163 (MPSALAIFTC…AANTPSMYSQ (163 aa)) are necessary for targeting to centrosomes. The Cytoplasmic segment spans residues 1–802 (MPSALAIFTC…REKGNNKPWP (802 aa)). Residues 28–85 (IKIGRSVARCRPAQNNATFDCKVLSRNHALVWFDHKTGKFYLQDTKSSNGTFINSQRL) enclose the FHA domain. Ser-148 is modified (phosphoserine). Coiled coils occupy residues 167 to 202 (QLSQ…ASDT) and 230 to 388 (NQTE…QEKT). Residues 339–359 (KKELQHKIDEMEEKEQELQAK) form a helical; Anchor for type IV membrane protein membrane-spanning segment. The span at 433-446 (KLSKENQTRAKESD) shows a compositional bias: basic and acidic residues. A disordered region spans residues 433-467 (KLSKENQTRAKESDFSDTLSPSKEKSSDDTTDAQM). Ser-448 and Ser-452 each carry phosphoserine. Positions 477–799 (AKVSLLKDDL…KLLREKGNNK (323 aa)) form a coiled coil. A helical; Anchor for type IV membrane protein transmembrane segment spans residues 803–823 (WMPMLAALVAVTAIVLYVPGL). At 824 to 828 (ARASP) the chain is on the extracellular side.

This sequence belongs to the SLMAP family. Homodimer. Interacts with myosin. Interacts with SIKE1 and both associate with the STRIPAK core complex composed of PP2A catalytic and scaffolding subunits, the striatins (PP2A regulatory subunits), the striatin-associated proteins MOB4, STRIP1 and STRIP2, PDCD10 and members of the STE20 kinases, such as STK24 and STK26. Interacts (via FHA domain) with STK3 (when phosphorylated); the interaction associates STK3 with the STRIPAK complex.

It is found in the cell membrane. The protein resides in the sarcolemma. The protein localises to the cytoplasm. Its subcellular location is the myofibril. It localises to the sarcomere. It is found in the m line. The protein resides in the z line. The protein localises to the cytoskeleton. Its subcellular location is the microtubule organizing center. It localises to the centrosome. It is found in the endoplasmic reticulum membrane. The protein resides in the mitochondrion membrane. Functionally, associates with the striatin-interacting phosphatase and kinase (STRIPAK) core complex, forming the extended (SIKE1:SLMAP)STRIPAK complex. The (SIKE1:SLMAP)STRIPAK complex dephosphorylates STK3 leading to the inhibition of Hippo signaling and the control of cell growth. May play a role during myoblast fusion. This chain is Sarcolemmal membrane-associated protein, found in Homo sapiens (Human).